The following is a 156-amino-acid chain: Ribosome maturation factor RimP (156 aa).

The protein belongs to the RimP family.

It localises to the cytoplasm. In terms of biological role, required for maturation of 30S ribosomal subunits. The chain is Ribosome maturation factor RimP from Exiguobacterium sp. (strain ATCC BAA-1283 / AT1b).